Here is a 1150-residue protein sequence, read N- to C-terminus: ETARPSVAGSGTTGTVSGASGSTGSSSGSTGATGASIGQPETSRISVAGSSGAPAVSSGASQAAGTSGAGPGTTASSVGVTETARPSVAGSGTTGTVSGASGSTGSSSGSPGATGASIGQPETSRISVAGSSGAPAVSSGASQAAGTSGAGPGTTASSVGVTETARPSVAGSGTTGTVSGASGSTGSSSGSPGATGASIGQPETSRISVAGSSGAPAVSSGASQAAGTSGAGPGTTASSVGVTETARPSVAGSGTTGTVSGASGSTGSSSGSPGATGASIGQPETSRISVAGSSGAPAVSSGASQAAGTSGAGPGTTASSVGVTETARPSVAGSGTTGTVSGASGSTGSSSGSPGATGASIGQPETSRISVAGSSGAPAVSSGASQAAGTSEATTSIEGAGTSGVGFKTEATTFPGENETTRVGIATGTTGIVSRKTLEPGSYNTEATTSIGRSGTTHTDLPGGTTIVLPGFSHSSQSSKPGSSVTTPGSPESGSETGTSGEFSTTVISGSSHTEATTFIGGSGSPGTGSRPGTTGELSGTTIASGNATTEATTSTETRIGPQTGAQTTVPGSQVSGSETGTSEAVSNPAIASGSSSTGTTSGASDSQVTGSRTGTTGVVLGTTVAPGSSSTGATTGVLINEGTRSTSLGTTRVASGTTYESGTSNSVPSGGSGTPGSGINTGGSSTQVTGIQTGTTAVGFGSTLLPGSSNTGATTSPSERTSPGSKTGITRVVSGTTVASGSSNTGATTSLGRGETTQGGIKIVITGVTVGTTVAPGSFNTKATTPTEVRAATGAGTAVGATSRSTGISTGPENSTPGTTETGSGTTSSPGGVKTEATTFKGVGTTEAGISSGNSPGSGGVTSSQEGTSREASETTTAPRISATGSTSVSKEITASPKVSSPETTAGATEDQENENKTGCPAPLPPPPVCHGPLGEEKSPGDVWTANCHKCTCTEAKTVDCKPKECPSPPTCKTGERLIKFKANDTCCEIGHCEKRTCLFNNTDYEVGSSFDDPNNPCVTYSCQNTGFTAVVQNCPKQTWCAEEDRVYDSKQCCYTCKSSCKPSPVNVTVRYNGCTIKVEMARCVGECKKTVTYDYDIFQLKNSCLCCQEEDYEFRDIVLDCPDGSTLPYRYRHITACSCLDPCQQSMT.

Low complexity-rich tracts occupy residues 1 to 36 (ETAR…TGAS) and 46 to 79 (SVAG…SSVG). A run of 5 repeats spans residues 1-44 (ETAR…ETSR), 45-125 (ISVA…ETSR), 126-206 (ISVA…ETSR), 207-287 (ISVA…ETSR), and 288-368 (ISVA…ETSR). Residues 1–368 (ETARPSVAGS…ASIGQPETSR (368 aa)) are 6 X 81 AA tandem repeats. 2 disordered regions span residues 1–730 (ETAR…KTGI) and 776–925 (APGS…PAPL). 6 O-linked (GalNAc...) serine; partial glycosylation sites follow: Ser46, Ser50, Ser51, Ser57, Ser58, and Ser61. O-linked (GalNAc...) threonine; partial glycosylation occurs at Thr66. O-linked (GalNAc...) serine; partial glycosylation is present at Ser67. O-linked (GalNAc...) threonine; partial glycosylation is found at Thr73 and Thr74. Ser76 and Ser77 each carry an O-linked (GalNAc...) serine; partial glycan. O-linked (GalNAc...) threonine; partial glycosylation is found at Thr81 and Thr83. Residues 86-117 (PSVAGSGTTGTVSGASGSTGSSSGSPGATGAS) show a composition bias toward low complexity. Residues Ser87 and Ser91 are each glycosylated (O-linked (GalNAc...) serine; partial). Residues Thr93, Thr94, and Thr96 are each glycosylated (O-linked (GalNAc...) threonine; partial). O-linked (GalNAc...) serine; partial glycans are attached at residues Ser98, Ser101, and Ser103. Thr104 carries O-linked (GalNAc...) threonine; partial glycosylation. 4 O-linked (GalNAc...) serine; partial glycosylation sites follow: Ser106, Ser107, Ser108, and Ser110. O-linked (GalNAc...) threonine; partial glycosylation is present at Thr114. O-linked (GalNAc...) serine; partial glycosylation occurs at Ser117. A glycan (O-linked (GalNAc...) threonine; partial) is linked at Thr123. O-linked (GalNAc...) serine; partial glycosylation occurs at Ser124. Low complexity-rich tracts occupy residues 127-160 (SVAG…SSVG), 167-198 (PSVA…TGAS), 208-241 (SVAG…SSVG), 248-279 (PSVA…TGAS), 289-322 (SVAG…SSVG), 329-360 (PSVA…TGAS), and 370-396 (SVAG…ATTS). The stretch at 369–391 (ISVAGSSGAPAVSSGASQAAGTS) is one 6; truncated repeat. Asn418 carries an N-linked (GlcNAc...) asparagine glycan. Residues 442-459 (SYNTEATTSIGRSGTTHT) show a composition bias toward polar residues. Residues 473–506 (SHSSQSSKPGSSVTTPGSPESGSETGTSGEFSTT) show a composition bias toward low complexity. 2 stretches are compositionally biased toward polar residues: residues 507–517 (VISGSSHTEAT) and 537–547 (ELSGTTIASGN). The N-linked (GlcNAc...) asparagine glycan is linked to Asn547. The segment covering 548 to 558 (ATTEATTSTET) has biased composition (low complexity). The segment covering 564–586 (TGAQTTVPGSQVSGSETGTSEAV) has biased composition (polar residues). Positions 590–625 (AIASGSSSTGTTSGASDSQVTGSRTGTTGVVLGTTV) are enriched in low complexity. 2 stretches are compositionally biased toward polar residues: residues 626 to 635 (APGSSSTGAT) and 643 to 661 (GTRS…TTYE). Over residues 671 to 682 (GGSGTPGSGINT) the composition is skewed to gly residues. Polar residues-rich tracts occupy residues 688–697 (QVTGIQTGTT), 706–729 (LPGS…SKTG), and 779–788 (SFNTKATTPT). The span at 790 to 833 (VRAATGAGTAVGATSRSTGISTGPENSTPGTTETGSGTTSSPGG) shows a compositional bias: low complexity. A compositionally biased stretch (polar residues) spans 875 to 908 (ETTTAPRISATGSTSVSKEITASPKVSSPETTAG). Asn917, Asn985, Asn1002, and Asn1068 each carry an N-linked (GlcNAc...) asparagine glycan. A VWFC domain is found at 929 to 995 (PVCHGPLGEE…DTCCEIGHCE (67 aa)). Intrachain disulfides connect Cys1062–Cys1109, Cys1076–Cys1123, Cys1085–Cys1139, and Cys1089–Cys1141. Residues 1062–1146 (CKPSPVNVTV…TACSCLDPCQ (85 aa)) enclose the CTCK domain.

As to quaternary structure, intermolecular disulfide bonds could help maintain a multimeric mucin structure. Post-translationally, extensively O-glycosylated on most but not all Ser and Thr residues of the repeat units. Highest glycosylation appears to occur on Ser residues which have Gly at positions at +2 or -2 from the glycosylation site or, where Gly is the penultimate residue. The presence of proline (usually at position +3 or -3) appears to also enhance glycosylation. Submaxillary mucosae.

Its subcellular location is the secreted. Apomucin is part of mucin, the major glycoprotein synthesized and secreted by mucous cells of the submaxillary gland. Its highly viscous aqueous solutions serve to lubricate the oral cavity and to protect it from the external environment. This is Apomucin from Sus scrofa (Pig).